The following is a 247-amino-acid chain: ATP synthase subunit a, chloroplastic (247 aa).

The next 5 membrane-spanning stretches (helical) occupy residues 38–58, 95–115, 134–154, 199–219, and 220–240; these read QVLITSWVVITILLGSVIIAV, VPFIGTMFLFIFVSNWSGALL, INTTVALALLTSAAYFYAGLS, LVVVVLVSLVPLVVPIPVMFL, and GLFTSGIQALIFATLAAAYIG.

Belongs to the ATPase A chain family. In terms of assembly, F-type ATPases have 2 components, CF(1) - the catalytic core - and CF(0) - the membrane proton channel. CF(1) has five subunits: alpha(3), beta(3), gamma(1), delta(1), epsilon(1). CF(0) has four main subunits: a, b, b' and c.

It localises to the plastid. The protein resides in the chloroplast thylakoid membrane. In terms of biological role, key component of the proton channel; it plays a direct role in the translocation of protons across the membrane. This chain is ATP synthase subunit a, chloroplastic, found in Oryza sativa subsp. indica (Rice).